A 526-amino-acid chain; its full sequence is Light-independent protochlorophyllide reductase subunit B (526 aa).

Residue D36 coordinates [4Fe-4S] cluster. D284 functions as the Proton donor in the catalytic mechanism. 419-420 (GL) contacts substrate.

This sequence belongs to the ChlB/BchB/BchZ family. In terms of assembly, protochlorophyllide reductase is composed of three subunits; BchL, BchN and BchB. Forms a heterotetramer of two BchB and two BchN subunits. [4Fe-4S] cluster serves as cofactor.

The catalysed reaction is chlorophyllide a + oxidized 2[4Fe-4S]-[ferredoxin] + 2 ADP + 2 phosphate = protochlorophyllide a + reduced 2[4Fe-4S]-[ferredoxin] + 2 ATP + 2 H2O. Its pathway is porphyrin-containing compound metabolism; bacteriochlorophyll biosynthesis (light-independent). Functionally, component of the dark-operative protochlorophyllide reductase (DPOR) that uses Mg-ATP and reduced ferredoxin to reduce ring D of protochlorophyllide (Pchlide) to form chlorophyllide a (Chlide). This reaction is light-independent. The NB-protein (BchN-BchB) is the catalytic component of the complex. The protein is Light-independent protochlorophyllide reductase subunit B of Halorhodospira halophila (strain DSM 244 / SL1) (Ectothiorhodospira halophila (strain DSM 244 / SL1)).